Here is a 229-residue protein sequence, read N- to C-terminus: Uracil-DNA glycosylase (229 aa).

Catalysis depends on Asp-64, which acts as the Proton acceptor.

Belongs to the uracil-DNA glycosylase (UDG) superfamily. UNG family.

The protein resides in the cytoplasm. It catalyses the reaction Hydrolyzes single-stranded DNA or mismatched double-stranded DNA and polynucleotides, releasing free uracil.. Excises uracil residues from the DNA which can arise as a result of misincorporation of dUMP residues by DNA polymerase or due to deamination of cytosine. The sequence is that of Uracil-DNA glycosylase from Salmonella choleraesuis (strain SC-B67).